The sequence spans 425 residues: Formyl-CoA:oxalate CoA-transferase (425 aa).

Residues 17-18 (QS), R38, 72-75 (LDTK), 96-98 (NFG), R104, and 136-139 (KVYE) contribute to the CoA site. The active-site Nucleophile is the D168. 247–249 (GGQ) serves as a coordination point for substrate.

Belongs to the CoA-transferase III family. Frc subfamily. In terms of assembly, homodimer.

The catalysed reaction is formyl-CoA + oxalate = oxalyl-CoA + formate. Its pathway is metabolic intermediate degradation; oxalate degradation; CO(2) and formate from oxalate: step 1/2. Involved in the catabolism of oxalate and in the adapatation to low pH via the induction of the oxalate-dependent acid tolerance response (ATR). Catalyzes the transfer of the CoA moiety from formyl-CoA to oxalate. In Rhodopseudomonas palustris (strain TIE-1), this protein is Formyl-CoA:oxalate CoA-transferase.